Reading from the N-terminus, the 460-residue chain is Cysteine--tRNA ligase (460 aa).

Cysteine 28 lines the Zn(2+) pocket. The 'HIGH' region signature appears at methionine 30–histidine 40. The Zn(2+) site is built by cysteine 209, histidine 234, and glutamate 238. Positions lysine 266–serine 270 match the 'KMSKS' region motif. ATP is bound at residue lysine 269.

Belongs to the class-I aminoacyl-tRNA synthetase family. In terms of assembly, monomer. The cofactor is Zn(2+).

The protein resides in the cytoplasm. The enzyme catalyses tRNA(Cys) + L-cysteine + ATP = L-cysteinyl-tRNA(Cys) + AMP + diphosphate. This is Cysteine--tRNA ligase from Thioalkalivibrio sulfidiphilus (strain HL-EbGR7).